The primary structure comprises 151 residues: Large ribosomal subunit protein uL13 (151 aa).

The protein belongs to the universal ribosomal protein uL13 family. In terms of assembly, part of the 50S ribosomal subunit.

Its function is as follows. This protein is one of the early assembly proteins of the 50S ribosomal subunit, although it is not seen to bind rRNA by itself. It is important during the early stages of 50S assembly. The protein is Large ribosomal subunit protein uL13 of Nostoc sp. (strain PCC 7120 / SAG 25.82 / UTEX 2576).